Reading from the N-terminus, the 261-residue chain is Glucose 1-dehydrogenase 4 (261 aa).

11–35 (VITGGSTGLGRAMAVRFGQEEAKVV) provides a ligand contact to NAD(+). Ser-145 contributes to the substrate binding site. The active-site Proton acceptor is Tyr-158.

This sequence belongs to the short-chain dehydrogenases/reductases (SDR) family. As to quaternary structure, homotetramer.

It catalyses the reaction D-glucose + NAD(+) = D-glucono-1,5-lactone + NADH + H(+). The catalysed reaction is D-glucose + NADP(+) = D-glucono-1,5-lactone + NADPH + H(+). The polypeptide is Glucose 1-dehydrogenase 4 (gdhIV) (Priestia megaterium (Bacillus megaterium)).